We begin with the raw amino-acid sequence, 482 residues long: Type II methyltransferase M.AvaI (482 aa).

The protein belongs to the N(4)/N(6)-methyltransferase family. N(4) subfamily.

It carries out the reaction a 2'-deoxycytidine in DNA + S-adenosyl-L-methionine = an N(4)-methyl-2'-deoxycytidine in DNA + S-adenosyl-L-homocysteine + H(+). Its function is as follows. An alpha subtype methylase that recognizes the double-stranded sequence 5'-CYCGRG-3', methylates C-1 on both strands, and protects the DNA from cleavage by the AvaI endonuclease. This is Type II methyltransferase M.AvaI from Anabaena variabilis.